Reading from the N-terminus, the 189-residue chain is MFDEQAIKQSVQNILVAIGEDPDREGLKETPRRVAQMYTELFSGMNQDPAEVLRVGYELGHREMVIIKDIPFYSMCEHHLLPFSGVVHIGYIPNIDGRVVGISKLARVVEIYAKRPQIQERMATQIADAIMDGLKCDGVAVVIEAEHMCMVMRGIKKPGSRVITSALRGSFHKSPAARAEFLSLIQHKG.

The Zn(2+) site is built by C76, H79, and C149.

The protein belongs to the GTP cyclohydrolase I family. As to quaternary structure, homomer.

The enzyme catalyses GTP + H2O = 7,8-dihydroneopterin 3'-triphosphate + formate + H(+). It functions in the pathway cofactor biosynthesis; 7,8-dihydroneopterin triphosphate biosynthesis; 7,8-dihydroneopterin triphosphate from GTP: step 1/1. The chain is GTP cyclohydrolase 1 from Dehalococcoides mccartyi (strain ATCC BAA-2100 / JCM 16839 / KCTC 5957 / BAV1).